Consider the following 317-residue polypeptide: Melanocyte-stimulating hormone receptor (317 aa).

The Extracellular segment spans residues 1 to 37 (MPVLGSQRRLLGSLNCTPPATFSLTLAPNRTGPQCLE). N-linked (GlcNAc...) asparagine glycosylation is present at Asn29. The chain crosses the membrane as a helical span at residues 38–63 (VSIPDGLFLSLGLVSLVENVLVVAAI). The Cytoplasmic segment spans residues 64–72 (AKNRNLHSP). The chain crosses the membrane as a helical span at residues 73–93 (MYYFICCLAVSDLLVSVSNVL). Over 94 to 118 (ETAVMLLLEAGALAARAAVVQQLDN) the chain is Extracellular. A helical membrane pass occupies residues 119–140 (VIDVLICGSMVSSLCFLGAIAM). Residues 141-163 (DRYISIFYALRYHSVVTLPRAWR) are Cytoplasmic-facing. A helical transmembrane segment spans residues 164–183 (IIAAIWVASILTSLLFITYY). Residues 184-191 (NHTVVLLC) are Extracellular-facing. The chain crosses the membrane as a helical span at residues 192 to 211 (LVGFFIAMLALMAILYVHML). Residues 212–240 (ARACQHARDIARLQKRQHPIHQGFGLKGA) lie on the Cytoplasmic side of the membrane. A helical transmembrane segment spans residues 241–266 (ATLTILLGVFFLCWGPFFLHLSLIVL). The Extracellular segment spans residues 267 to 279 (CPQHPTCGCIFKN). Residues 280–300 (FNLFLALIICNAIVDPLIYAF) traverse the membrane as a helical segment. The Cytoplasmic portion of the chain corresponds to 301–317 (RSQELRKTLQEVLQCSW). Residue Cys315 is the site of S-palmitoyl cysteine attachment.

This sequence belongs to the G-protein coupled receptor 1 family. As to quaternary structure, interacts with MGRN1, but does not undergo MGRN1-mediated ubiquitination; this interaction competes with GNAS-binding and thus inhibits agonist-induced cAMP production. Interacts with OPN3; the interaction results in a decrease in MC1R-mediated cAMP signaling and ultimately a decrease in melanin production in melanocytes.

The protein localises to the cell membrane. In terms of biological role, receptor for MSH (alpha, beta and gamma) and ACTH. The activity of this receptor is mediated by G proteins which activate adenylate cyclase. Mediates melanogenesis, the production of eumelanin (black/brown) and phaeomelanin (red/yellow), via regulation of cAMP signaling in melanocytes. The polypeptide is Melanocyte-stimulating hormone receptor (MC1R) (Alces alces alces (European moose)).